Here is a 445-residue protein sequence, read N- to C-terminus: MIWKSLFSALAILTHILPALTAPALDSELSSQSEDKYVFAHFMVGIVKDYQLEDWKEDMTTAQSIGIDAFALNCASIDSYTPTQLALAYEAAEQVNFKVVISFDFAYWTNGDTEKITEYMKQYAGHPAQMQYKGAAVVSTFVGDSFNWDAVKQNTPHPIYAVPNLQDPAEATTGPAKSADGAFSWLAWPTDGGNSIIPGPMTTVWDDRFVHFLAGKTYMAPVSPWFSTHFNTKNWVFVCENLPTLRWEQMLSLQPDLIEIISWNDYGESHYIGPYSAHHSDDGSSQWATNMPHDGWRNLFKPYIAAYKSGAKTPTVEADEVVYWYRPTPKGVVCTGDTLSAPMGADMLSDSIFVATMLTSPGTLTVQSGNNAPVDIEVPAGIVTSNVTMGVGAQSFKVARDGQTILSGQGGLDVKDSCVHYNFNVYVGSTKGGDGSNTTGARGSM.

Residues 1–21 form the signal peptide; sequence MIWKSLFSALAILTHILPALT. N-linked (GlcNAc...) asparagine glycans are attached at residues Asn386 and Asn437.

This sequence belongs to the glycosyl hydrolase 71 family. In terms of assembly, monomer.

It is found in the secreted. The catalysed reaction is Endohydrolysis of (1-&gt;3)-alpha-D-glucosidic linkages in isolichenin, pseudonigeran and nigeran.. Hydrolyzes 1,3-alpha-glucan predominantly into pentasaccharides. May enhance the efficacy of fungal antibiotics by degrading bacterial exopolysaccharides. The protein is Mutanase Pc12g07500 of Penicillium rubens (strain ATCC 28089 / DSM 1075 / NRRL 1951 / Wisconsin 54-1255) (Penicillium chrysogenum).